Here is a 350-residue protein sequence, read N- to C-terminus: MDHKMSMYLFVSYLAIFTLFFKGFVSSFPSGYNNGYNNGHGHGLTSNLNYRFYDRSCPRLQTIVKSGVWRAFKDDSRIAASLLRLHFHDCFVNGCDGSILLNDSEDFKGEKNAQPNRNSVRGFEVIEDIKSDIESSCPLTVSCADIVALAAREAVVLTGGPFWPVPLGRRDSLTASEQAANTNLPSPFEALENITAKFVTLGLDLKDVVVLSGAHTIGFAQCFVIKHRLFNFKGSGQPDPNLAASSALLSKLKDTCPNVDSSDSKLAALDAASSVKFDNAYYVNLMNNIGLLDSDQTLMTDPTAAALVKSYSENPYLFSRDFAVSMVKMGNIGVMTGSDGVIRGKCGFPG.

An N-terminal signal peptide occupies residues 1–27; that stretch reads MDHKMSMYLFVSYLAIFTLFFKGFVSS. Intrachain disulfides connect cysteine 57–cysteine 137, cysteine 90–cysteine 95, cysteine 143–cysteine 346, and cysteine 222–cysteine 256. Histidine 88 functions as the Proton acceptor in the catalytic mechanism. Ca(2+) contacts are provided by aspartate 89, valine 92, glycine 94, aspartate 96, and serine 98. Asparagine 102 is a glycosylation site (N-linked (GlcNAc...) asparagine). Proline 185 is a substrate binding site. A glycan (N-linked (GlcNAc...) asparagine) is linked at asparagine 193. A heme b-binding site is contributed by histidine 215. Threonine 216 contributes to the Ca(2+) binding site. Ca(2+) is bound by residues aspartate 270, serine 273, and aspartate 278.

Belongs to the peroxidase family. Classical plant (class III) peroxidase subfamily. Heme b is required as a cofactor. Ca(2+) serves as cofactor. In terms of tissue distribution, expressed in the whole plant, with the highest expression in roots.

It is found in the secreted. The enzyme catalyses 2 a phenolic donor + H2O2 = 2 a phenolic radical donor + 2 H2O. In terms of biological role, removal of H(2)O(2), oxidation of toxic reductants, biosynthesis and degradation of lignin, suberization, auxin catabolism, response to environmental stresses such as wounding, pathogen attack and oxidative stress. These functions might be dependent on each isozyme/isoform in each plant tissue. The protein is Peroxidase 10 (PER10) of Arabidopsis thaliana (Mouse-ear cress).